We begin with the raw amino-acid sequence, 156 residues long: 6,7-dimethyl-8-ribityllumazine synthase (156 aa).

5-amino-6-(D-ribitylamino)uracil is bound by residues Phe22, 57–59 (AYE), and 81–83 (TVI). 86–87 (GT) contributes to the (2S)-2-hydroxy-3-oxobutyl phosphate binding site. His89 serves as the catalytic Proton donor. Phe114 serves as a coordination point for 5-amino-6-(D-ribitylamino)uracil. Residue Arg128 participates in (2S)-2-hydroxy-3-oxobutyl phosphate binding.

The protein belongs to the DMRL synthase family. As to quaternary structure, forms an icosahedral capsid composed of 60 subunits, arranged as a dodecamer of pentamers.

It carries out the reaction (2S)-2-hydroxy-3-oxobutyl phosphate + 5-amino-6-(D-ribitylamino)uracil = 6,7-dimethyl-8-(1-D-ribityl)lumazine + phosphate + 2 H2O + H(+). Its pathway is cofactor biosynthesis; riboflavin biosynthesis; riboflavin from 2-hydroxy-3-oxobutyl phosphate and 5-amino-6-(D-ribitylamino)uracil: step 1/2. Catalyzes the formation of 6,7-dimethyl-8-ribityllumazine by condensation of 5-amino-6-(D-ribitylamino)uracil with 3,4-dihydroxy-2-butanone 4-phosphate. This is the penultimate step in the biosynthesis of riboflavin. The sequence is that of 6,7-dimethyl-8-ribityllumazine synthase from Citrobacter koseri (strain ATCC BAA-895 / CDC 4225-83 / SGSC4696).